Consider the following 151-residue polypeptide: Sec-independent protein translocase protein TatB (151 aa).

Residues 1–21 form a helical membrane-spanning segment; the sequence is MFDIGFLELLICGVIALLVLG. Composition is skewed to basic and acidic residues over residues 87–99 and 122–132; these read KYEHMILPDDQTR and EPPHEPVRDEA. Positions 87–151 are disordered; sequence KYEHMILPDD…SPTSPSDKYS (65 aa). Positions 134–151 are enriched in low complexity; the sequence is ASDQPSDSSPTSPSDKYS.

This sequence belongs to the TatB family. As to quaternary structure, the Tat system comprises two distinct complexes: a TatABC complex, containing multiple copies of TatA, TatB and TatC subunits, and a separate TatA complex, containing only TatA subunits. Substrates initially bind to the TatABC complex, which probably triggers association of the separate TatA complex to form the active translocon.

The protein localises to the cell inner membrane. Part of the twin-arginine translocation (Tat) system that transports large folded proteins containing a characteristic twin-arginine motif in their signal peptide across membranes. Together with TatC, TatB is part of a receptor directly interacting with Tat signal peptides. TatB may form an oligomeric binding site that transiently accommodates folded Tat precursor proteins before their translocation. In Marinobacter nauticus (strain ATCC 700491 / DSM 11845 / VT8) (Marinobacter aquaeolei), this protein is Sec-independent protein translocase protein TatB.